Reading from the N-terminus, the 547-residue chain is ATP synthase subunit alpha (547 aa).

173-180 serves as a coordination point for ATP; it reads GDRATGKT. The segment at 526-547 is disordered; the sequence is PEAEALADEDVEQEQIVRQKRG. Acidic residues predominate over residues 528–538; that stretch reads AEALADEDVEQ.

This sequence belongs to the ATPase alpha/beta chains family. As to quaternary structure, F-type ATPases have 2 components, CF(1) - the catalytic core - and CF(0) - the membrane proton channel. CF(1) has five subunits: alpha(3), beta(3), gamma(1), delta(1), epsilon(1). CF(0) has three main subunits: a(1), b(2) and c(9-12). The alpha and beta chains form an alternating ring which encloses part of the gamma chain. CF(1) is attached to CF(0) by a central stalk formed by the gamma and epsilon chains, while a peripheral stalk is formed by the delta and b chains.

It localises to the cell membrane. It catalyses the reaction ATP + H2O + 4 H(+)(in) = ADP + phosphate + 5 H(+)(out). Produces ATP from ADP in the presence of a proton gradient across the membrane. The alpha chain is a regulatory subunit. The chain is ATP synthase subunit alpha from Nocardioides sp. (strain ATCC BAA-499 / JS614).